A 159-amino-acid polypeptide reads, in one-letter code: Protein Smg homolog (159 aa).

Belongs to the Smg family.

The chain is Protein Smg homolog from Shewanella amazonensis (strain ATCC BAA-1098 / SB2B).